Here is a 650-residue protein sequence, read N- to C-terminus: Putative F-box protein R757 (650 aa).

An F-box domain is found at 7–53 (FSVMESLPTELAYHVLSFIDFNSVVTYRLCSQESNNFIKSMLVFFPI).

This chain is Putative F-box protein R757, found in Acanthamoeba polyphaga mimivirus (APMV).